Reading from the N-terminus, the 79-residue chain is Schistosomin (79 aa).

Post-translationally, contains four disulfide bonds. As to expression, growth-controlling neurosecretory light green cells, in the cerebral ganglia of the CNS.

Its subcellular location is the secreted. Functionally, anti-gonadotropic neuropeptide. It also decreases the binding capacity of calfluxin to membrane-bound receptors of the albumen gland. This leads to inhibition of the reproductive activities of the infected snail. In Lymnaea stagnalis (Great pond snail), this protein is Schistosomin.